The primary structure comprises 194 residues: Ion-translocating oxidoreductase complex subunit A (194 aa).

A run of 6 helical transmembrane segments spans residues 1 to 21 (MVMH…FILV), 48 to 68 (CVIV…LIPF), 73 to 93 (LCTM…EIIV), 103 to 123 (LLGI…IPLM), 135 to 155 (VLYG…FSSI), and 172 to 192 (PIAL…DGLI).

The protein belongs to the NqrDE/RnfAE family. As to quaternary structure, the complex is composed of six subunits: RnfA, RnfB, RnfC, RnfD, RnfE and RnfG.

It localises to the cell inner membrane. Functionally, part of a membrane-bound complex that couples electron transfer with translocation of ions across the membrane. In Buchnera aphidicola subsp. Baizongia pistaciae (strain Bp), this protein is Ion-translocating oxidoreductase complex subunit A.